Reading from the N-terminus, the 386-residue chain is Succinate--CoA ligase [ADP-forming] subunit beta (386 aa).

The region spanning 9–244 is the ATP-grasp domain; the sequence is KEIFRKYGVP…LAEEEPREIQ (236 aa). ATP contacts are provided by residues Lys46, 53–55, Glu99, Leu102, and Glu107; that span reads GRG. Mg(2+) is bound by residues Asn199 and Asp213. Substrate-binding positions include Asn264 and 321-323; that span reads GIM.

The protein belongs to the succinate/malate CoA ligase beta subunit family. Heterotetramer of two alpha and two beta subunits. The cofactor is Mg(2+).

It catalyses the reaction succinate + ATP + CoA = succinyl-CoA + ADP + phosphate. It carries out the reaction GTP + succinate + CoA = succinyl-CoA + GDP + phosphate. It functions in the pathway carbohydrate metabolism; tricarboxylic acid cycle; succinate from succinyl-CoA (ligase route): step 1/1. Its function is as follows. Succinyl-CoA synthetase functions in the citric acid cycle (TCA), coupling the hydrolysis of succinyl-CoA to the synthesis of either ATP or GTP and thus represents the only step of substrate-level phosphorylation in the TCA. The beta subunit provides nucleotide specificity of the enzyme and binds the substrate succinate, while the binding sites for coenzyme A and phosphate are found in the alpha subunit. The chain is Succinate--CoA ligase [ADP-forming] subunit beta from Myxococcus xanthus (strain DK1622).